A 37-amino-acid polypeptide reads, in one-letter code: Mu-cyrtautoxin-As1a (37 aa).

Intrachain disulfides connect Cys1-Cys15, Cys8-Cys19, Cys14-Cys35, and Cys26-Cys31.

It belongs to the neurotoxin 13 (insecticidal toxin ABC) family. 01 (Aps III) subfamily. As to expression, expressed by the venom gland.

It is found in the secreted. In terms of biological role, the recombinant mu-cyrtautoxin-As1a potently and voltage-independently blocks voltage-gated sodium channels (Nav) of insects. It acts by pluging the outer vestibule of the channel. It acts in combination with a weak (30%) voltage-independent block of insect voltage-gated calcium (Cav) channels (low-voltage and high-voltage channels). Tested on DUM neurons, it inhibits sodium currents with an IC(50) of 540 nM (and a Hill coefficient &gt;1, reflecting an incomplete block at higher concentrations). In vivo, it induces flaccid paralysis in adult Australian sheep blowfly Lucilia cuprina. It is both paralytic and lethal, when injected into lepidopteran larvae. It is a slower acting toxin, being lethal at 24 hours, but not paralytic at 1 hour post-injection. The chain is Mu-cyrtautoxin-As1a from Apomastus schlingeri (Trap-door spider).